The primary structure comprises 192 residues: Imidazoleglycerol-phosphate dehydratase (192 aa).

This sequence belongs to the imidazoleglycerol-phosphate dehydratase family.

It localises to the cytoplasm. It carries out the reaction D-erythro-1-(imidazol-4-yl)glycerol 3-phosphate = 3-(imidazol-4-yl)-2-oxopropyl phosphate + H2O. Its pathway is amino-acid biosynthesis; L-histidine biosynthesis; L-histidine from 5-phospho-alpha-D-ribose 1-diphosphate: step 6/9. The polypeptide is Imidazoleglycerol-phosphate dehydratase (Staphylococcus aureus (strain MRSA252)).